Reading from the N-terminus, the 1360-residue chain is Transmembrane protein 94 (1360 aa).

Residues 1–64 (MDLREKHLGE…FLHLSNRCSC (64 aa)) are Cytoplasmic-facing. The helical transmembrane segment at 65-85 (FHWPGASLMLLAVLLLLCCCG) threads the bilayer. The Lumenal segment spans residues 86 to 92 (GQPAGSQ). A helical membrane pass occupies residues 93 to 113 (GVELVNASALFLLLLLNLVLI). Over 114-273 (GRQDRLKRRE…RPVTALDNER (160 aa)) the chain is Cytoplasmic. Residues Ser221 and Ser225 each carry the phosphoserine modification. The chain crosses the membrane as a helical span at residues 274–294 (FTVQSVMLHYAVPVVLAGFLI). The Lumenal segment spans residues 295–320 (TNALRFMFKAPGVTSWQYTLLQLQVN). Residues 321 to 341 (GMLPILPLLFPVLWVLATACG) form a helical membrane-spanning segment. Topologically, residues 342–1096 (EARVLAQMSK…RHATYGIRKC (755 aa)) are cytoplasmic. Positions 417–422 (DKQGIL) match the DKQGIL motif. Phosphoserine occurs at positions 444, 445, and 454. The interval 487 to 545 (EQERSDWLADGPKPSEPYPHHKGHGRSKHPSGSNVSFSRDTEGGEEEPSKAQPGTEGDP) is disordered. Residues 506–515 (HHKGHGRSKH) show a composition bias toward basic residues. Residues Ser517, Ser522, Ser802, and Ser945 each carry the phosphoserine modification. Residues 1097 to 1117 (FLFLLQCQLTLVVIQFLSCLV) traverse the membrane as a helical segment. The Lumenal segment spans residues 1118-1124 (QLPPLLS). A helical transmembrane segment spans residues 1125 to 1145 (TTDILWLSCFCYPLLSISLLG). Topologically, residues 1146–1171 (KPPHSSIMSMATGKNLQSIPKKTQHY) are cytoplasmic. A helical membrane pass occupies residues 1172 to 1192 (FLLCFLLKFSLTISSCLVCFG). The Lumenal portion of the chain corresponds to 1193–1232 (FTLQSFCDSARARNLTNCSSVMLCSNDDRAPAWFEDFANG). N-linked (GlcNAc...) asparagine glycans are attached at residues Asn1206 and Asn1209. A helical transmembrane segment spans residues 1233-1253 (LLSAQKLTAALIVLHTVFISI). The Cytoplasmic segment spans residues 1254-1269 (THVHRTKPLWRKSPLT). A helical transmembrane segment spans residues 1270-1290 (NLWWAVTVPVVLLGQVVQTVV). Over 1291 to 1310 (DLQLWTHRDSRVHFGLEDVP) the chain is Lumenal. Residues 1311 to 1331 (LLTWLLGCLSLVLVVVTNEIV) form a helical membrane-spanning segment. At 1332-1360 (KLHEIRVRVRYQKRQKLQFETKLGMNSPF) the chain is on the cytoplasmic side. Residues 1355–1357 (GMN) carry the GMN; metal-binding motif motif.

Forms homooligomers.

The protein resides in the endoplasmic reticulum membrane. Could function in the uptake of Mg(2+) from the cytosol into the endoplasmic reticulum and regulate intracellular Mg(2+) homeostasis. In Mus musculus (Mouse), this protein is Transmembrane protein 94.